The following is a 109-amino-acid chain: uncharacterized protein (109 aa).

This is an uncharacterized protein from Microplitis demolitor bracovirus (isolate Webb) (MdBV).